Here is a 36-residue protein sequence, read N- to C-terminus: Pancreatic polypeptide (36 aa).

A Phenylalanine amide modification is found at F36.

It belongs to the NPY family.

Its subcellular location is the secreted. In terms of biological role, hormone secreted by pancreatic cells that acts as a regulator of pancreatic and gastrointestinal functions. The sequence is that of Pancreatic polypeptide (ppy) from Rana temporaria (European common frog).